Consider the following 158-residue polypeptide: Hypoxanthine DNA glycosylase (158 aa).

Asparagine 39 is a catalytic residue.

It belongs to the uracil-DNA glycosylase (UDG) superfamily. Type 6 (HDG) family.

In terms of biological role, excises hypoxanthine, a deamination product of adenine, from double-stranded DNA. Acts on double-stranded DNA containing G/I, T/I, A/I and C/I base pairs, but not on single-stranded inosine-containing DNA. Also has minor xanthine DNA glycosylase activity. Lacks any detectable uracil-DNA glycosylase activity. This chain is Hypoxanthine DNA glycosylase, found in Methanosarcina acetivorans (strain ATCC 35395 / DSM 2834 / JCM 12185 / C2A).